The chain runs to 375 residues: Aminomethyltransferase (375 aa).

It belongs to the GcvT family. As to quaternary structure, the glycine cleavage system is composed of four proteins: P, T, L and H.

It catalyses the reaction N(6)-[(R)-S(8)-aminomethyldihydrolipoyl]-L-lysyl-[protein] + (6S)-5,6,7,8-tetrahydrofolate = N(6)-[(R)-dihydrolipoyl]-L-lysyl-[protein] + (6R)-5,10-methylene-5,6,7,8-tetrahydrofolate + NH4(+). Functionally, the glycine cleavage system catalyzes the degradation of glycine. This Cupriavidus pinatubonensis (strain JMP 134 / LMG 1197) (Cupriavidus necator (strain JMP 134)) protein is Aminomethyltransferase.